A 182-amino-acid polypeptide reads, in one-letter code: NADH-quinone oxidoreductase subunit B 2 (182 aa).

Positions 55, 56, 120, and 150 each coordinate [4Fe-4S] cluster.

The protein belongs to the complex I 20 kDa subunit family. In terms of assembly, NDH-1 is composed of 14 different subunits. Subunits NuoB, C, D, E, F, and G constitute the peripheral sector of the complex. [4Fe-4S] cluster serves as cofactor.

Its subcellular location is the cell inner membrane. It catalyses the reaction a quinone + NADH + 5 H(+)(in) = a quinol + NAD(+) + 4 H(+)(out). Functionally, NDH-1 shuttles electrons from NADH, via FMN and iron-sulfur (Fe-S) centers, to quinones in the respiratory chain. The immediate electron acceptor for the enzyme in this species is believed to be ubiquinone. Couples the redox reaction to proton translocation (for every two electrons transferred, four hydrogen ions are translocated across the cytoplasmic membrane), and thus conserves the redox energy in a proton gradient. The protein is NADH-quinone oxidoreductase subunit B 2 of Sorangium cellulosum (strain So ce56) (Polyangium cellulosum (strain So ce56)).